We begin with the raw amino-acid sequence, 155 residues long: Large ribosomal subunit protein uL13 (155 aa).

Belongs to the universal ribosomal protein uL13 family. As to quaternary structure, part of the 50S ribosomal subunit.

In terms of biological role, this protein is one of the early assembly proteins of the 50S ribosomal subunit, although it is not seen to bind rRNA by itself. It is important during the early stages of 50S assembly. This chain is Large ribosomal subunit protein uL13, found in Rickettsia felis (strain ATCC VR-1525 / URRWXCal2) (Rickettsia azadi).